The following is a 589-amino-acid chain: MALAGGPDSFLHHPYYQDQVEQTSPHHPRDLAGPGFPAQPDRLAPHQEDDVDLEALVNDMDASLESLCSASETAPLLHNGQHARGPPPPGARPLRPQASPRHRVPRSQPLHILAARRLQEEDQQFRTSSLPAIPNPFPELCGPGSPPVLSPGSLPPGQAAAKQDVKVFSEDGTCKVVEILADMTARDLCQLLVYRSHCVDDNSWTLVEHHPHLGLERGLEDHERVTQVQHTLASESKFLFRKNYAKYEFFKNPTNFFPEQMVTWCQQSNGSQTQLLQNFLNSSSCPEIQGFLHVKELGRKSWKKLYVCLRRSGLYCSTKGASKEPRHLQLLADLEDSSIFSLIAGRKQYGAPTDYGFCIKPNRVRTEAKELRLLCAEDEQSRTCWMTAFRLLKYGMLLYQNYRVPQQRKAVLSPFSAPVRSVSENSLVAMDFSGQTGRVIENPAEAQSAALEEGHAWRKRSTRMNILGSQSPLHPSTLSTVIHRTQHWFHGRISREESHRIIKQQGLVDGLFLLRDSQSNPKAFVLTLCHHQKIKNFQILPCEDDGQTFFSLDDGNTKFSDLIQLVDFYQLNKGVLPCKLKHHCIRVAL.

2 disordered regions span residues 1-51 and 77-107; these read MALA…EDDV and LHNGQHARGPPPPGARPLRPQASPRHRVPRS. The residue at position 99 (Ser-99) is a Phosphoserine. Residue Ser-145 is modified to Phosphoserine; by MTOR, MAPK1 and MAPK3. The region spanning 161–245 is the Ras-associating domain; that stretch reads AKQDVKVFSE…SKFLFRKNYA (85 aa). The region spanning 285–394 is the PH domain; it reads CPEIQGFLHV…WMTAFRLLKY (110 aa). Ser-413 carries the phosphoserine; by MAPK1 and MAPK3; in vitro modification. The residue at position 423 (Ser-423) is a Phosphoserine; by MTOR and PKB/AKT1. Ser-426 carries the post-translational modification Phosphoserine. Ser-471 carries the post-translational modification Phosphoserine; by MTOR, MAPK1 and MAPK3. In terms of domain architecture, SH2 spans 488 to 584; the sequence is WFHGRISREE…VLPCKLKHHC (97 aa).

Belongs to the GRB7/10/14 family. Interacts with ligand-activated tyrosine kinase receptors, including FGFR1, INSR, IGF1R, MET and PDGFRB in a phosphotyrosine-dependent manner through the SH2 domain. Poorly binds to the EGFR. Directly interacts with MAP3K14/NIK and is recruited to the EGFR-ERBB2 complex. Interacts with GIGYF1/PERQ1 and GIGYF2/TNRC15. When unphosphorylated, interacts with AKT1 and when phosphorylated with YWHAE/14-3-3 epsilon. Interacts with NEDD4. Interacts with LRP6, thus interfering with the binding of AXIN1 to LRP6. Binds relatively non-specifically to several phosphoinositides, including PI(5)P, PI(4,5)P2, PI(3,4)P2 and PI(3,4,5)P3, with modest affinities through the PH domain. Binds to activated NRAS. Phosphorylated on serine residues upon EGF, FGF and PDGF stimulation.

The protein resides in the cytoplasm. Its activity is regulated as follows. Phosphorylation by mTORC1 stabilizes and activates GRB10 constituting a feedback pathway by which mTORC1 inhibits INSR-dependent signaling. Adapter protein which modulates coupling of a number of cell surface receptor kinases with specific signaling pathways. Binds to, and suppress signals from, activated receptors tyrosine kinases, including the insulin (INSR) and insulin-like growth factor (IGF1R) receptors. The inhibitory effect can be achieved by 2 mechanisms: interference with the signaling pathway and increased receptor degradation. Delays and reduces AKT1 phosphorylation in response to insulin stimulation. Blocks association between INSR and IRS1 and IRS2 and prevents insulin-stimulated IRS1 and IRS2 tyrosine phosphorylation. Recruits NEDD4 to IGF1R, leading to IGF1R ubiquitination, increased internalization and degradation by both the proteasomal and lysosomal pathways. A similar role in the mediation of ubiquitination also has been suggested with INSR. Negatively regulates Wnt signaling by interacting with LRP6 intracellular portion and interfering with the binding of AXIN1 to LRP6. Positive regulator of the KDR/VEGFR-2 signaling pathway. May inhibit NEDD4-mediated degradation of KDR/VEGFR-2. The polypeptide is Growth factor receptor-bound protein 10 (Grb10) (Sus scrofa (Pig)).